Reading from the N-terminus, the 191-residue chain is Fe/S biogenesis protein NfuA (191 aa).

Residues Cys-149 and Cys-152 each coordinate [4Fe-4S] cluster.

This sequence belongs to the NfuA family. Homodimer. [4Fe-4S] cluster serves as cofactor.

Functionally, involved in iron-sulfur cluster biogenesis. Binds a 4Fe-4S cluster, can transfer this cluster to apoproteins, and thereby intervenes in the maturation of Fe/S proteins. Could also act as a scaffold/chaperone for damaged Fe/S proteins. This is Fe/S biogenesis protein NfuA from Pectobacterium atrosepticum (strain SCRI 1043 / ATCC BAA-672) (Erwinia carotovora subsp. atroseptica).